The following is a 513-amino-acid chain: Sterol 14-alpha demethylase (513 aa).

A helical membrane pass occupies residues 8–28 (AYALLAFVAIMALNVTYQFLF). Residues Asn32 and Asn332 are each glycosylated (N-linked (GlcNAc...) asparagine). Cys453 provides a ligand contact to heme.

Belongs to the cytochrome P450 family. It depends on heme as a cofactor.

It localises to the endoplasmic reticulum membrane. It carries out the reaction a 14alpha-methyl steroid + 3 reduced [NADPH--hemoprotein reductase] + 3 O2 = a Delta(14) steroid + formate + 3 oxidized [NADPH--hemoprotein reductase] + 4 H2O + 4 H(+). The catalysed reaction is a 14alpha-methyl steroid + reduced [NADPH--hemoprotein reductase] + O2 = a 14alpha-hydroxymethyl steroid + oxidized [NADPH--hemoprotein reductase] + H2O + H(+). The enzyme catalyses a 14alpha-hydroxymethyl steroid + reduced [NADPH--hemoprotein reductase] + O2 = a 14alpha-formyl steroid + oxidized [NADPH--hemoprotein reductase] + 2 H2O + H(+). It catalyses the reaction a 14alpha-formyl steroid + reduced [NADPH--hemoprotein reductase] + O2 = a Delta(14) steroid + formate + oxidized [NADPH--hemoprotein reductase] + H2O + 2 H(+). It carries out the reaction lanosterol + 3 reduced [NADPH--hemoprotein reductase] + 3 O2 = 4,4-dimethyl-5alpha-cholesta-8,14,24-trien-3beta-ol + formate + 3 oxidized [NADPH--hemoprotein reductase] + 4 H2O + 4 H(+). The catalysed reaction is lanosterol + reduced [NADPH--hemoprotein reductase] + O2 = 32-hydroxylanosterol + oxidized [NADPH--hemoprotein reductase] + H2O + H(+). The enzyme catalyses 32-hydroxylanosterol + reduced [NADPH--hemoprotein reductase] + O2 = 32-oxolanosterol + oxidized [NADPH--hemoprotein reductase] + 2 H2O + H(+). It catalyses the reaction 32-oxolanosterol + reduced [NADPH--hemoprotein reductase] + O2 = 4,4-dimethyl-5alpha-cholesta-8,14,24-trien-3beta-ol + formate + oxidized [NADPH--hemoprotein reductase] + H2O + 2 H(+). It carries out the reaction eburicol + 3 reduced [NADPH--hemoprotein reductase] + 3 O2 = 14-demethyleburicol + formate + 3 oxidized [NADPH--hemoprotein reductase] + 4 H2O + 4 H(+). The catalysed reaction is eburicol + reduced [NADPH--hemoprotein reductase] + O2 = 32-hydroxyeburicol + oxidized [NADPH--hemoprotein reductase] + H2O + H(+). The enzyme catalyses 32-hydroxyeburicol + reduced [NADPH--hemoprotein reductase] + O2 = 32-oxoeburicol + oxidized [NADPH--hemoprotein reductase] + 2 H2O + H(+). It catalyses the reaction 32-oxoeburicol + reduced [NADPH--hemoprotein reductase] + O2 = 14-demethyleburicol + formate + oxidized [NADPH--hemoprotein reductase] + H2O + 2 H(+). The protein operates within steroid biosynthesis; sterol biosynthesis. Functionally, sterol 14alpha-demethylase, encoded by cyp51A, cyp51B and cyp51C, that plays a critical role in the third module of ergosterol biosynthesis pathway, being ergosterol the major sterol component in fungal membranes that participates in a variety of functions. The third module or late pathway involves the ergosterol synthesis itself through consecutive reactions that mainly occur in the endoplasmic reticulum (ER) membrane. In filamentous fungi, during the initial step of this module, lanosterol (lanosta-8,24-dien-3beta-ol) can be metabolized to eburicol. Sterol 14alpha-demethylase catalyzes the three-step oxidative removal of the 14alpha-methyl group (C-32) of both these sterols in the form of formate, and converts eburicol and lanosterol to 14-demethyleburicol (4,4,24-trimethylergosta-8,14,24(28)-trienol) and 4,4-dimethyl-5alpha-cholesta-8,14,24-trien-3beta-ol, respectively, which are further metabolized by other enzymes in the pathway to ergosterol. Can also use substrates not intrinsic to fungi, such as 24,25-dihydrolanosterol (DHL), producing 4,4'-dimethyl-8,14-cholestadien-3-beta-ol, but at lower rates than the endogenous substrates. Its function is as follows. As a target of azole drugs, plays a crucial role in azole drug susceptibility. The polypeptide is Sterol 14-alpha demethylase (Aspergillus flavus (strain ATCC 200026 / FGSC A1120 / IAM 13836 / NRRL 3357 / JCM 12722 / SRRC 167)).